A 430-amino-acid polypeptide reads, in one-letter code: Serine hydroxymethyltransferase (430 aa).

120 to 122 is a (6S)-5,6,7,8-tetrahydrofolate binding site; sequence GHI. The residue at position 226 (lysine 226) is an N6-(pyridoxal phosphate)lysine.

Belongs to the SHMT family. As to quaternary structure, homodimer. Pyridoxal 5'-phosphate is required as a cofactor.

It localises to the cytoplasm. It functions in the pathway amino-acid biosynthesis; glycine biosynthesis; glycine from L-serine: step 1/1. Functionally, catalyzes the reversible interconversion of serine and glycine with a modified folate serving as the one-carbon carrier. Also exhibits a pteridine-independent aldolase activity toward beta-hydroxyamino acids, producing glycine and aldehydes, via a retro-aldol mechanism. This is Serine hydroxymethyltransferase from Pyrobaculum calidifontis (strain DSM 21063 / JCM 11548 / VA1).